We begin with the raw amino-acid sequence, 81 residues long: UPF0729 protein C18orf32 homolog (81 aa).

Over residues 45-58 the composition is skewed to polar residues; that stretch reads AASDQKVSEKSNGT. Residues 45–81 are disordered; the sequence is AASDQKVSEKSNGTCKPESNGEATANGSTIAADKKTD.

The protein belongs to the UPF0729 family.

This is UPF0729 protein C18orf32 homolog from Anoplopoma fimbria (Sablefish).